Reading from the N-terminus, the 331-residue chain is Phosphate acyltransferase (331 aa).

It belongs to the PlsX family. As to quaternary structure, homodimer. Probably interacts with PlsY.

The protein localises to the cytoplasm. It carries out the reaction a fatty acyl-[ACP] + phosphate = an acyl phosphate + holo-[ACP]. It participates in lipid metabolism; phospholipid metabolism. In terms of biological role, catalyzes the reversible formation of acyl-phosphate (acyl-PO(4)) from acyl-[acyl-carrier-protein] (acyl-ACP). This enzyme utilizes acyl-ACP as fatty acyl donor, but not acyl-CoA. This Ureaplasma parvum serovar 3 (strain ATCC 27815 / 27 / NCTC 11736) protein is Phosphate acyltransferase.